Consider the following 112-residue polypeptide: UPF0342 protein SSA_1465 (112 aa).

It belongs to the UPF0342 family.

The sequence is that of UPF0342 protein SSA_1465 from Streptococcus sanguinis (strain SK36).